Here is a 488-residue protein sequence, read N- to C-terminus: NADH-quinone oxidoreductase subunit N 2 (488 aa).

The next 14 helical transmembrane spans lie at 18–38 (FLPEFILLLLAFILFTLELFI), 45–65 (LVLNVVSYVGYFSVLMSLLIP), 81–101 (PLAVTVKIFAVLITLAILPFA), 110–130 (SFYGEFYYILAFTLLGVFVLA), 135–155 (LIILYVALELVSVGFYILTAL), 169–189 (YLILGGLSIALASYGAAFMYI), 210–230 (LVLGLVFFLIGLAVKIGAVPF), 242–262 (PTPVTALMASVGKLAFFIPLV), 274–294 (LVWTITVGVIAALTMLYGNLV), 308–328 (SSIAHSGYIMAGAAVAKVIGM), 331–351 (VIYFLVAYAVMSAGAFLVLAL), 375–395 (IAFAFFVYMVALLGVPPTVGF), 412–434 (WLAFIMILSAAISTGYYIRLVVV), and 458–478 (FALTLASVLLGVLPSLVWFLI).

The protein belongs to the complex I subunit 2 family. NDH-1 is composed of 14 different subunits. Subunits NuoA, H, J, K, L, M, N constitute the membrane sector of the complex.

The protein resides in the cell inner membrane. The catalysed reaction is a quinone + NADH + 5 H(+)(in) = a quinol + NAD(+) + 4 H(+)(out). In terms of biological role, NDH-1 shuttles electrons from NADH, via FMN and iron-sulfur (Fe-S) centers, to quinones in the respiratory chain. The immediate electron acceptor for the enzyme in this species is believed to be ubiquinone. Couples the redox reaction to proton translocation (for every two electrons transferred, four hydrogen ions are translocated across the cytoplasmic membrane), and thus conserves the redox energy in a proton gradient. The protein is NADH-quinone oxidoreductase subunit N 2 of Aquifex aeolicus (strain VF5).